We begin with the raw amino-acid sequence, 414 residues long: Serine--tRNA ligase (414 aa).

230 to 232 (TSE) is a binding site for L-serine. Residue 261–263 (RQE) coordinates ATP. Glutamate 284 contributes to the L-serine binding site. Residue 348–351 (EISS) participates in ATP binding. Residue serine 382 participates in L-serine binding.

It belongs to the class-II aminoacyl-tRNA synthetase family. Type-1 seryl-tRNA synthetase subfamily. As to quaternary structure, homodimer. The tRNA molecule binds across the dimer.

The protein resides in the cytoplasm. The catalysed reaction is tRNA(Ser) + L-serine + ATP = L-seryl-tRNA(Ser) + AMP + diphosphate + H(+). It carries out the reaction tRNA(Sec) + L-serine + ATP = L-seryl-tRNA(Sec) + AMP + diphosphate + H(+). The protein operates within aminoacyl-tRNA biosynthesis; selenocysteinyl-tRNA(Sec) biosynthesis; L-seryl-tRNA(Sec) from L-serine and tRNA(Sec): step 1/1. In terms of biological role, catalyzes the attachment of serine to tRNA(Ser). Is also able to aminoacylate tRNA(Sec) with serine, to form the misacylated tRNA L-seryl-tRNA(Sec), which will be further converted into selenocysteinyl-tRNA(Sec). The chain is Serine--tRNA ligase from Campylobacter fetus subsp. fetus (strain 82-40).